Reading from the N-terminus, the 176-residue chain is ATP-dependent protease subunit HslV (176 aa).

The active site involves T2. Na(+)-binding residues include G157, C160, and T163.

It belongs to the peptidase T1B family. HslV subfamily. As to quaternary structure, a double ring-shaped homohexamer of HslV is capped on each side by a ring-shaped HslU homohexamer. The assembly of the HslU/HslV complex is dependent on binding of ATP.

The protein localises to the cytoplasm. The catalysed reaction is ATP-dependent cleavage of peptide bonds with broad specificity.. Its activity is regulated as follows. Allosterically activated by HslU binding. In terms of biological role, protease subunit of a proteasome-like degradation complex believed to be a general protein degrading machinery. This is ATP-dependent protease subunit HslV from Ectopseudomonas mendocina (strain ymp) (Pseudomonas mendocina).